The following is a 144-amino-acid chain: 6-pyruvoyl tetrahydrobiopterin synthase (144 aa).

At Ser18 the chain carries Phosphoserine. A Zn(2+)-binding site is contributed by His23. Ser27 is modified (phosphoserine). Residue Cys42 is the Proton acceptor of the active site. Residues His48 and His50 each coordinate Zn(2+). His89 acts as the Charge relay system in catalysis. Tyr127 bears the Phosphotyrosine mark. Residue Glu133 is the Charge relay system of the active site.

The protein belongs to the PTPS family. Homodimer. Homohexamer formed of two homotrimers in a head to head fashion. The cofactor is Zn(2+). In terms of processing, phosphorylation of Ser-18 is required for maximal enzyme activity.

The catalysed reaction is 7,8-dihydroneopterin 3'-triphosphate = 6-pyruvoyl-5,6,7,8-tetrahydropterin + triphosphate + H(+). Its pathway is cofactor biosynthesis; tetrahydrobiopterin biosynthesis; tetrahydrobiopterin from 7,8-dihydroneopterin triphosphate: step 1/3. Functionally, involved in the biosynthesis of tetrahydrobiopterin, an essential cofactor of aromatic amino acid hydroxylases. Catalyzes the transformation of 7,8-dihydroneopterin triphosphate into 6-pyruvoyl tetrahydropterin. This Mus musculus (Mouse) protein is 6-pyruvoyl tetrahydrobiopterin synthase.